The primary structure comprises 334 residues: Methionyl-tRNA formyltransferase (334 aa).

111–114 (SILP) contributes to the (6S)-5,6,7,8-tetrahydrofolate binding site.

It belongs to the Fmt family.

The catalysed reaction is L-methionyl-tRNA(fMet) + (6R)-10-formyltetrahydrofolate = N-formyl-L-methionyl-tRNA(fMet) + (6S)-5,6,7,8-tetrahydrofolate + H(+). In terms of biological role, attaches a formyl group to the free amino group of methionyl-tRNA(fMet). The formyl group appears to play a dual role in the initiator identity of N-formylmethionyl-tRNA by promoting its recognition by IF2 and preventing the misappropriation of this tRNA by the elongation apparatus. This chain is Methionyl-tRNA formyltransferase, found in Trichormus variabilis (strain ATCC 29413 / PCC 7937) (Anabaena variabilis).